Here is a 108-residue protein sequence, read N- to C-terminus: UPF0060 membrane protein YnfA (108 aa).

Residues 1 to 5 (MIKTT) are Periplasmic-facing. The helical transmembrane segment at 6–26 (LLFFATALCEIIGCFLPWLWL) threads the bilayer. The Cytoplasmic portion of the chain corresponds to 27-30 (KRNA). A helical membrane pass occupies residues 31-51 (SIWLLLPAGISLALFVWLLTL). The Periplasmic segment spans residues 52–60 (HPAASGRVY). Residues 61-81 (AAYGGVYVCTALIWLRVVDGV) form a helical membrane-spanning segment. Residues 82–84 (KLS) are Cytoplasmic-facing. Residues 85-105 (LYDWTGALIALCGMLIIVAGW) traverse the membrane as a helical segment. The Periplasmic segment spans residues 106 to 108 (GRT).

This sequence belongs to the UPF0060 family.

It localises to the cell inner membrane. This chain is UPF0060 membrane protein YnfA, found in Escherichia coli (strain SMS-3-5 / SECEC).